The sequence spans 436 residues: GTPase Der (436 aa).

2 EngA-type G domains span residues 4–167 and 176–351; these read PIVA…NKES and IRLS…ENHK. Residues 10–17, 57–61, 119–122, 182–189, 229–233, and 294–297 contribute to the GTP site; these read GKPNVGKS, DTGGI, NKVD, GRPNVGKS, DTAGM, and NKWD. A KH-like domain is found at 352–436; the sequence is KRVQSSTLNE…PIHIIPRKRN (85 aa).

The protein belongs to the TRAFAC class TrmE-Era-EngA-EngB-Septin-like GTPase superfamily. EngA (Der) GTPase family. Associates with the 50S ribosomal subunit.

In terms of biological role, GTPase that plays an essential role in the late steps of ribosome biogenesis. This chain is GTPase Der, found in Staphylococcus epidermidis (strain ATCC 35984 / DSM 28319 / BCRC 17069 / CCUG 31568 / BM 3577 / RP62A).